The chain runs to 66 residues: Large ribosomal subunit protein uL29 (66 aa).

The protein belongs to the universal ribosomal protein uL29 family.

The polypeptide is Large ribosomal subunit protein uL29 (Borrelia garinii subsp. bavariensis (strain ATCC BAA-2496 / DSM 23469 / PBi) (Borreliella bavariensis)).